A 142-amino-acid polypeptide reads, in one-letter code: Large ribosomal subunit protein uL23 (142 aa).

The protein belongs to the universal ribosomal protein uL23 family.

This is Large ribosomal subunit protein uL23 (RPL25) from Kluyveromyces lactis (strain ATCC 8585 / CBS 2359 / DSM 70799 / NBRC 1267 / NRRL Y-1140 / WM37) (Yeast).